The primary structure comprises 1308 residues: Chromosome partition protein Smc (1308 aa).

Residue 34–41 (PNGCGKSN) participates in ATP binding. Residues 115–181 (AAREASMEEV…VAEGQPSDAQ (67 aa)) are disordered. Positions 137–169 (TEAEATEQQAAPSEGAAPTTEATAPSTENEAAP) are enriched in low complexity. The stretch at 278-600 (ITKYKTKKRL…DTLRAEYATL (323 aa)) forms a coiled coil. One can recognise an SMC hinge domain in the interval 637–757 (AGVLADFLEV…VPDPAIGREL (121 aa)). 2 coiled-coil regions span residues 791 to 1046 (SLKR…ELHA) and 1110 to 1148 (MALE…EIDQ).

Belongs to the SMC family. As to quaternary structure, homodimer.

It is found in the cytoplasm. Its function is as follows. Required for chromosome condensation and partitioning. This Koribacter versatilis (strain Ellin345) protein is Chromosome partition protein Smc.